Consider the following 151-residue polypeptide: Ribosome maturation factor RimP (151 aa).

The protein belongs to the RimP family.

It localises to the cytoplasm. Its function is as follows. Required for maturation of 30S ribosomal subunits. In Mannheimia succiniciproducens (strain KCTC 0769BP / MBEL55E), this protein is Ribosome maturation factor RimP.